The primary structure comprises 442 residues: Kelch domain-containing protein 10 (442 aa).

The segment at 1–57 is disordered; it reads MSAAQGWDRNRRRGGGAAGAGGGGSGAGGGSGGSGGRGTGQLNRFVQLSGRPHLPGK. At Arg13 the chain carries Omega-N-methylarginine. Gly residues predominate over residues 15-39; that stretch reads GGAAGAGGGGSGAGGGSGGSGGRGT. Kelch repeat units lie at residues 87–154, 155–198, 199–260, 261–319, 320–364, and 365–403; these read RPPP…PREL, ASMS…ALLS, CRGK…PEER, YRHE…RRCH, SCVQ…PEPV, and YFHC…LVVP. An interaction with CUL2 region spans residues 401 to 442; sequence VVPSLLELAWEKLLAAFPNLANLSRTQLLHLGLTQGLIERLK.

This sequence belongs to the KLHDC10 family. Component of a CRL2 E3 ubiquitin-protein ligase complex, also named ECS (Elongin BC-CUL2/5-SOCS-box protein) complex, composed of CUL2, Elongin BC (ELOB and ELOC), RBX1 and substrate-specific adapter KLHDC10. Interacts (via the 6 Kelch repeats) with PPP5C.

The protein localises to the nucleus. It is found in the cytoplasm. The protein operates within protein modification; protein ubiquitination. Functionally, substrate-recognition component of a Cul2-RING (CRL2) E3 ubiquitin-protein ligase complex of the DesCEND (destruction via C-end degrons) pathway, which recognizes a C-degron located at the extreme C-terminus of target proteins, leading to their ubiquitination and degradation. The C-degron recognized by the DesCEND pathway is usually a motif of less than ten residues and can be present in full-length proteins, truncated proteins or proteolytically cleaved forms. The CRL2(KLHDC10) complex specifically recognizes proteins with a proline-glycine (Pro-Gly) or an alanine tail (CAT tail) at the C-terminus, leading to their ubiquitination and degradation. The CRL2(KLHDC10) complex is involved in the ribosome-associated quality control (RQC) pathway, which mediates the extraction of incompletely synthesized nascent chains from stalled ribosomes: CRL2(KLHDC10) acts downstream of NEMF and recognizes CAT tails associated with stalled nascent chains, leading to their ubiquitination and degradation. Participates in the oxidative stress-induced cell death through MAP3K5 activation. Inhibits PPP5C phosphatase activity on MAP3K5. Acts as a regulator of necroptosis. The chain is Kelch domain-containing protein 10 from Homo sapiens (Human).